We begin with the raw amino-acid sequence, 623 residues long: Probable lysophospholipase 5 (623 aa).

The signal sequence occupies residues 1–19 (MKLSSFGLFLALQLLPALG). Positions 67–607 (ACPSGSLLRP…NQYCWNGTIA (541 aa)) constitute a PLA2c domain. N-linked (GlcNAc...) asparagine glycosylation is found at Asn118, Asn153, Asn187, Asn232, Asn256, Asn264, Asn293, Asn331, Asn360, Asn367, Asn400, Asn403, Asn474, Asn508, Asn513, Asn537, Asn564, Asn586, and Asn603.

The protein belongs to the lysophospholipase family.

It localises to the secreted. The enzyme catalyses a 1-acyl-sn-glycero-3-phosphocholine + H2O = sn-glycerol 3-phosphocholine + a fatty acid + H(+). Catalyzes the release of fatty acids from lysophospholipids. The chain is Probable lysophospholipase 5 (plb5) from Schizosaccharomyces pombe (strain 972 / ATCC 24843) (Fission yeast).